The following is an 839-amino-acid chain: Taste receptor type 1 member 2 (839 aa).

Positions 1 to 19 (MGPRAKTISSLFFLLWVLA) are cleaved as a signal peptide. Over 20–566 (EPAENSDFYL…VFLEWHEAPT (547 aa)) the chain is Extracellular. N-linked (GlcNAc...) asparagine glycans are attached at residues Asn84, Asn248, Asn292, Asn312, Asn368, Asn428, Asn487, and Asn527. A helical membrane pass occupies residues 567–587 (IAVALLAALGFLSTLAILVIF). Over 588–602 (WRHFQTPIVRSAGGP) the chain is Cytoplasmic. A helical membrane pass occupies residues 603–623 (MCFLMLTLLLVAYMVVPVYVG). The Extracellular segment spans residues 624–635 (PPKVSTCLCRQA). A helical membrane pass occupies residues 636–656 (LFPLCFTICISCIAVRSFQIV). Topologically, residues 657-681 (CAFKMASRFPRAYSYWVRYQGPYVS) are cytoplasmic. Residues 682-702 (MAFITVLKMVIVVIGMLATGL) form a helical membrane-spanning segment. Topologically, residues 703-727 (SPTTRTDPDDPKITIVSCNPNYRNS) are extracellular. The chain crosses the membrane as a helical span at residues 728 to 748 (LLFNTSLDLLLSVVGFSFAYM). The Cytoplasmic portion of the chain corresponds to 749-760 (GKELPTNYNEAK). Residues 761 to 781 (FITLSMTFYFTSSVSLCTFMS) traverse the membrane as a helical segment. Over 782–784 (AYS) the chain is Extracellular. The chain crosses the membrane as a helical span at residues 785 to 805 (GVLVTIVDLLVTVLNLLAISL). Over 806–839 (GYFGPKCYMILFYPERNTPAYFNSMIQGYTMRRD) the chain is Cytoplasmic.

Belongs to the G-protein coupled receptor 3 family. TAS1R subfamily. In terms of assembly, forms heterodimers with TAS1R3.

It localises to the cell membrane. Putative taste receptor. TAS1R2/TAS1R3 recognizes diverse natural and synthetic sweeteners. This Homo sapiens (Human) protein is Taste receptor type 1 member 2 (TAS1R2).